The primary structure comprises 73 residues: UPF0352 protein APL_0584 (73 aa).

The protein belongs to the UPF0352 family.

The chain is UPF0352 protein APL_0584 from Actinobacillus pleuropneumoniae serotype 5b (strain L20).